We begin with the raw amino-acid sequence, 122 residues long: MIQMQSQLEVADNSGAKRVQCIKVLGGSKRRTAGVGDVIVVSIKEAQPRGKVKKGDVHRAVIVRTAKDVRRADGSVIRFDSNAAVLVNKNEEPIGTRIFGPVVRELRGRGYMKIISLAPEVL.

The protein belongs to the universal ribosomal protein uL14 family. As to quaternary structure, part of the 50S ribosomal subunit. Forms a cluster with proteins L3 and L19. In the 70S ribosome, L14 and L19 interact and together make contacts with the 16S rRNA in bridges B5 and B8.

Functionally, binds to 23S rRNA. Forms part of two intersubunit bridges in the 70S ribosome. The chain is Large ribosomal subunit protein uL14 from Sphingopyxis alaskensis (strain DSM 13593 / LMG 18877 / RB2256) (Sphingomonas alaskensis).